The following is a 272-amino-acid chain: Glutamate racemase (272 aa).

Residues 13 to 14 (DS) and 45 to 46 (YG) each bind substrate. The Proton donor/acceptor role is filled by Cys76. 77–78 (NT) contributes to the substrate binding site. Catalysis depends on Cys187, which acts as the Proton donor/acceptor. 188–189 (TH) contacts substrate.

This sequence belongs to the aspartate/glutamate racemases family.

The enzyme catalyses L-glutamate = D-glutamate. Its pathway is cell wall biogenesis; peptidoglycan biosynthesis. Its function is as follows. Provides the (R)-glutamate required for cell wall biosynthesis. This Roseiflexus sp. (strain RS-1) protein is Glutamate racemase.